A 213-amino-acid polypeptide reads, in one-letter code: NADH-quinone oxidoreductase subunit I (213 aa).

4Fe-4S ferredoxin-type domains are found at residues 74 to 103 and 113 to 142; these read RFIE…METS and ENYS…HGTE. The [4Fe-4S] cluster site is built by cysteine 83, cysteine 86, cysteine 89, cysteine 93, cysteine 122, cysteine 125, cysteine 128, and cysteine 132.

It belongs to the complex I 23 kDa subunit family. In terms of assembly, NDH-1 is composed of 14 different subunits. Subunits NuoA, H, J, K, L, M, N constitute the membrane sector of the complex. [4Fe-4S] cluster is required as a cofactor.

The protein localises to the cell inner membrane. The catalysed reaction is a quinone + NADH + 5 H(+)(in) = a quinol + NAD(+) + 4 H(+)(out). In terms of biological role, NDH-1 shuttles electrons from NADH, via FMN and iron-sulfur (Fe-S) centers, to quinones in the respiratory chain. The immediate electron acceptor for the enzyme in this species is believed to be ubiquinone. Couples the redox reaction to proton translocation (for every two electrons transferred, four hydrogen ions are translocated across the cytoplasmic membrane), and thus conserves the redox energy in a proton gradient. The polypeptide is NADH-quinone oxidoreductase subunit I (Campylobacter jejuni subsp. jejuni serotype O:23/36 (strain 81-176)).